The primary structure comprises 77 residues: Translation initiation factor IF-1, chloroplastic (77 aa).

An S1-like domain is found at 1–71 (MKRQKWIHEG…TRGRIIYRLR (71 aa)).

Belongs to the IF-1 family. In terms of assembly, component of the 30S ribosomal translation pre-initiation complex which assembles on the 30S ribosome in the order IF-2 and IF-3, IF-1 and N-formylmethionyl-tRNA(fMet); mRNA recruitment can occur at any time during PIC assembly.

Its subcellular location is the plastid. The protein localises to the chloroplast. Functionally, one of the essential components for the initiation of protein synthesis. Stabilizes the binding of IF-2 and IF-3 on the 30S subunit to which N-formylmethionyl-tRNA(fMet) subsequently binds. Helps modulate mRNA selection, yielding the 30S pre-initiation complex (PIC). Upon addition of the 50S ribosomal subunit IF-1, IF-2 and IF-3 are released leaving the mature 70S translation initiation complex. The chain is Translation initiation factor IF-1, chloroplastic from Leucophyllum frutescens (Texas ranger).